The primary structure comprises 522 residues: Protein nucleotidyltransferase YdiU (522 aa).

Positions 109, 111, 112, 132, 144, 145, 195, and 202 each coordinate ATP. Catalysis depends on Asp-271, which acts as the Proton acceptor. Residues Asn-272 and Asp-281 each contribute to the Mg(2+) site. Asp-281 serves as a coordination point for ATP.

The protein belongs to the SELO family. It depends on Mg(2+) as a cofactor. The cofactor is Mn(2+).

The catalysed reaction is L-seryl-[protein] + ATP = 3-O-(5'-adenylyl)-L-seryl-[protein] + diphosphate. The enzyme catalyses L-threonyl-[protein] + ATP = 3-O-(5'-adenylyl)-L-threonyl-[protein] + diphosphate. It carries out the reaction L-tyrosyl-[protein] + ATP = O-(5'-adenylyl)-L-tyrosyl-[protein] + diphosphate. It catalyses the reaction L-histidyl-[protein] + UTP = N(tele)-(5'-uridylyl)-L-histidyl-[protein] + diphosphate. The catalysed reaction is L-seryl-[protein] + UTP = O-(5'-uridylyl)-L-seryl-[protein] + diphosphate. The enzyme catalyses L-tyrosyl-[protein] + UTP = O-(5'-uridylyl)-L-tyrosyl-[protein] + diphosphate. Its function is as follows. Nucleotidyltransferase involved in the post-translational modification of proteins. It can catalyze the addition of adenosine monophosphate (AMP) or uridine monophosphate (UMP) to a protein, resulting in modifications known as AMPylation and UMPylation. The sequence is that of Protein nucleotidyltransferase YdiU from Burkholderia vietnamiensis (strain G4 / LMG 22486) (Burkholderia cepacia (strain R1808)).